The following is a 491-amino-acid chain: Ketol-acid reductoisomerase (NADP(+)) (491 aa).

Residues 15 to 208 (AQLGKCRFMG…GGHRAGVLES (194 aa)) form the KARI N-terminal Rossmann domain. NADP(+)-binding positions include 45 to 48 (CGAQ), arginine 68, arginine 76, serine 78, and 108 to 110 (DKQ). Histidine 132 is an active-site residue. Glycine 158 provides a ligand contact to NADP(+). KARI C-terminal knotted domains are found at residues 209–344 (SFVA…TAPQ) and 345–484 (YEGK…MTDM). Positions 217, 221, 389, and 393 each coordinate Mg(2+). Serine 414 contacts substrate.

It belongs to the ketol-acid reductoisomerase family. The cofactor is Mg(2+).

The catalysed reaction is (2R)-2,3-dihydroxy-3-methylbutanoate + NADP(+) = (2S)-2-acetolactate + NADPH + H(+). It catalyses the reaction (2R,3R)-2,3-dihydroxy-3-methylpentanoate + NADP(+) = (S)-2-ethyl-2-hydroxy-3-oxobutanoate + NADPH + H(+). It functions in the pathway amino-acid biosynthesis; L-isoleucine biosynthesis; L-isoleucine from 2-oxobutanoate: step 2/4. The protein operates within amino-acid biosynthesis; L-valine biosynthesis; L-valine from pyruvate: step 2/4. Involved in the biosynthesis of branched-chain amino acids (BCAA). Catalyzes an alkyl-migration followed by a ketol-acid reduction of (S)-2-acetolactate (S2AL) to yield (R)-2,3-dihydroxy-isovalerate. In the isomerase reaction, S2AL is rearranged via a Mg-dependent methyl migration to produce 3-hydroxy-3-methyl-2-ketobutyrate (HMKB). In the reductase reaction, this 2-ketoacid undergoes a metal-dependent reduction by NADPH to yield (R)-2,3-dihydroxy-isovalerate. In Escherichia coli (strain UTI89 / UPEC), this protein is Ketol-acid reductoisomerase (NADP(+)).